Consider the following 283-residue polypeptide: Elongation factor Ts (283 aa).

Positions 82-85 (TDFV) are involved in Mg(2+) ion dislocation from EF-Tu.

Belongs to the EF-Ts family.

It is found in the cytoplasm. In terms of biological role, associates with the EF-Tu.GDP complex and induces the exchange of GDP to GTP. It remains bound to the aminoacyl-tRNA.EF-Tu.GTP complex up to the GTP hydrolysis stage on the ribosome. This chain is Elongation factor Ts, found in Photorhabdus laumondii subsp. laumondii (strain DSM 15139 / CIP 105565 / TT01) (Photorhabdus luminescens subsp. laumondii).